Consider the following 205-residue polypeptide: MTKRAESKFKINRRLGVNLWGRAKSPLNKRDYAPGQHGQRRKGKPSDFGIQLMAKQKLKGYYGNISEKQFRKYYEEAVRRKGDTSENLIELLERRLDAVIYRMKFALTPFAARQFVNHGHVLVNGKRVNIPSYLVKVGDVVEVREKSKQLAMVLDATQSGERDVPEYLHVDHRLMKGTYARYPKLSDVPYPVQMEPNLVIEYYSR.

The tract at residues 27-46 is disordered; it reads LNKRDYAPGQHGQRRKGKPS. Positions 118-178 constitute an S4 RNA-binding domain; sequence HGHVLVNGKR…HVDHRLMKGT (61 aa).

Belongs to the universal ribosomal protein uS4 family. In terms of assembly, part of the 30S ribosomal subunit. Contacts protein S5. The interaction surface between S4 and S5 is involved in control of translational fidelity.

Functionally, one of the primary rRNA binding proteins, it binds directly to 16S rRNA where it nucleates assembly of the body of the 30S subunit. With S5 and S12 plays an important role in translational accuracy. This is Small ribosomal subunit protein uS4 from Granulibacter bethesdensis (strain ATCC BAA-1260 / CGDNIH1).